Consider the following 576-residue polypeptide: Glucoamylase ARB_02327-1 (576 aa).

An N-terminal signal peptide occupies residues 1 to 20 (MGLASTVSLALLGLCSLARA). Residue Trp141 coordinates substrate. Asn168 and Asn192 each carry an N-linked (GlcNAc...) asparagine glycan. Asp197 functions as the Proton acceptor in the catalytic mechanism. The active-site Proton donor is Glu200. 2 cysteine pairs are disulfide-bonded: Cys243–Cys470 and Cys285–Cys293. A CBM20 domain is found at 477–576 (GSGGDTVAVT…GSFTQNDTWR (100 aa)). Residues 552 to 576 (TWESDPNRSITTSASGSFTQNDTWR) form a disordered region. N-linked (GlcNAc...) asparagine glycans are attached at residues Asn558 and Asn572.

It belongs to the glycosyl hydrolase 15 family.

It is found in the secreted. It carries out the reaction Hydrolysis of terminal (1-&gt;4)-linked alpha-D-glucose residues successively from non-reducing ends of the chains with release of beta-D-glucose.. This Schizophyllum commune (strain H4-8 / FGSC 9210) (Split gill fungus) protein is Glucoamylase ARB_02327-1.